The chain runs to 65 residues: Bacteriocin amylovorin-L (65 aa).

The propeptide occupies 1–15 (MKQLNSEQLQNIIGG). A helical transmembrane segment spans residues 39-59 (LGGVWGAVIGGVGGAAVCGLA).

As to quaternary structure, active lactobin is composed of two different peptides, one which is lactobin A.

It is found in the secreted. It localises to the host cell membrane. In terms of biological role, this heat stable bacteriocin inhibits the growth of closely related Lactobacillus species. It may act as a pore-forming protein, creating a channel in the cell membrane. It kills Lactobacillus helveticus ATCC 15009, but displays no activity towards Listeria species. The sequence is that of Bacteriocin amylovorin-L (amyL) from Lactobacillus amylovorus.